We begin with the raw amino-acid sequence, 828 residues long: Glycerol-3-phosphate acyltransferase (828 aa).

Positions 309–314 (CHRSHI) match the HXXXXD motif motif.

It belongs to the GPAT/DAPAT family.

The protein resides in the cell inner membrane. It catalyses the reaction sn-glycerol 3-phosphate + an acyl-CoA = a 1-acyl-sn-glycero-3-phosphate + CoA. Its pathway is phospholipid metabolism; CDP-diacylglycerol biosynthesis; CDP-diacylglycerol from sn-glycerol 3-phosphate: step 1/3. The sequence is that of Glycerol-3-phosphate acyltransferase from Pseudomonas putida (strain GB-1).